Here is a 218-residue protein sequence, read N- to C-terminus: Probable signal peptidase I-2 (218 aa).

The Cytoplasmic segment spans residues 1 to 26 (MTENIVRETSKKKESPPENTWLELGK). A helical membrane pass occupies residues 27-43 (TMVTAVILAIGIRTFVA). Topologically, residues 44 to 218 (EARYIPSSSM…ISPQTVPESR (175 aa)) are periplasmic. Catalysis depends on residues Ser52 and Lys100.

It belongs to the peptidase S26 family.

Its subcellular location is the cell membrane. It carries out the reaction Cleavage of hydrophobic, N-terminal signal or leader sequences from secreted and periplasmic proteins.. This is Probable signal peptidase I-2 (lepB2) from Synechocystis sp. (strain ATCC 27184 / PCC 6803 / Kazusa).